A 145-amino-acid polypeptide reads, in one-letter code: Cystatin-F (145 aa).

The first 19 residues, 1-19, serve as a signal peptide directing secretion; that stretch reads MRAAGTLLAFCCLVLSTTG. N-linked (GlcNAc...) asparagine glycosylation is present at N62. Positions 81 to 85 match the Secondary area of contact motif; the sequence is QIVKG. C99 and C110 are joined by a disulfide. An N-linked (GlcNAc...) asparagine glycan is attached at N115. An intrachain disulfide couples C124 to C144.

Belongs to the cystatin family. In terms of assembly, homodimer; disulfide-linked. In terms of tissue distribution, primarily expressed in peripheral blood cells and spleen.

The protein resides in the secreted. It localises to the cytoplasm. In terms of biological role, inhibits papain and cathepsin L but with affinities lower than other cystatins. May play a role in immune regulation through inhibition of a unique target in the hematopoietic system. The sequence is that of Cystatin-F (CST7) from Homo sapiens (Human).